We begin with the raw amino-acid sequence, 396 residues long: L-lactate dehydrogenase (396 aa).

The region spanning 1–380 is the FMN hydroxy acid dehydrogenase domain; sequence MIISAASDYR…SGDSLVQELG (380 aa). Position 24 (Tyr24) interacts with substrate. Positions 106 and 127 each coordinate FMN. Tyr129 is a substrate binding site. Thr155 provides a ligand contact to FMN. Residue Arg164 participates in substrate binding. Lys251 contacts FMN. His275 functions as the Proton acceptor in the catalytic mechanism. Position 278 (Arg278) interacts with substrate. Position 306–330 (306–330) interacts with FMN; sequence DSGIRNGLDVVRMIALGADTVLLGR.

Belongs to the FMN-dependent alpha-hydroxy acid dehydrogenase family. Requires FMN as cofactor.

It is found in the cell inner membrane. The enzyme catalyses (S)-lactate + A = pyruvate + AH2. Functionally, catalyzes the conversion of L-lactate to pyruvate. Is coupled to the respiratory chain. This Salmonella arizonae (strain ATCC BAA-731 / CDC346-86 / RSK2980) protein is L-lactate dehydrogenase.